Reading from the N-terminus, the 573-residue chain is LysM domain-containing protein ARB_01155/01156 (573 aa).

An N-terminal signal peptide occupies residues 1–18 (MIPRNLISGLFLLPFVVA). Asn-46, Asn-71, and Asn-283 each carry an N-linked (GlcNAc...) asparagine glycan. In terms of domain architecture, LysM spans 373 to 419 (RYYEVVAGDQCNTIALHFGITVDAFLSLNTQIDERCSNLWIAYAYCV). Residues 375-405 (YEVVAGDQCNTIALHFGITVDAFLSLNTQID) are lysM domain.

The protein localises to the secreted. Its function is as follows. Might have a role in sequestration of chitin oligosaccharides (breakdown products of fungal cell walls that are released during invasion and act as triggers of host immunity) to dampen host defense. The polypeptide is LysM domain-containing protein ARB_01155/01156 (Arthroderma benhamiae (strain ATCC MYA-4681 / CBS 112371) (Trichophyton mentagrophytes)).